A 453-amino-acid polypeptide reads, in one-letter code: Allantoinase (453 aa).

Residues His59, His61, Lys146, His186, His242, and Asp315 each coordinate Zn(2+). Lys146 bears the N6-carboxylysine mark.

This sequence belongs to the metallo-dependent hydrolases superfamily. Allantoinase family. Homotetramer. The cofactor is Zn(2+). Carboxylation allows a single lysine to coordinate two zinc ions.

The enzyme catalyses (S)-allantoin + H2O = allantoate + H(+). It participates in nitrogen metabolism; (S)-allantoin degradation; allantoate from (S)-allantoin: step 1/1. Functionally, catalyzes the conversion of allantoin (5-ureidohydantoin) to allantoic acid by hydrolytic cleavage of the five-member hydantoin ring. The chain is Allantoinase from Salmonella choleraesuis (strain SC-B67).